Consider the following 358-residue polypeptide: Magnesium-protoporphyrin IX monomethyl ester [oxidative] cyclase 2 (358 aa).

This sequence belongs to the AcsF family. Fe cation is required as a cofactor.

The catalysed reaction is Mg-protoporphyrin IX 13-monomethyl ester + 3 NADPH + 3 O2 + 2 H(+) = 3,8-divinyl protochlorophyllide a + 3 NADP(+) + 5 H2O. It functions in the pathway porphyrin-containing compound metabolism; chlorophyll biosynthesis (light-independent). Catalyzes the formation of the isocyclic ring in chlorophyll biosynthesis. Mediates the cyclase reaction, which results in the formation of divinylprotochlorophyllide (Pchlide) characteristic of all chlorophylls from magnesium-protoporphyrin IX 13-monomethyl ester (MgPMME). The protein is Magnesium-protoporphyrin IX monomethyl ester [oxidative] cyclase 2 of Nostoc sp. (strain PCC 7120 / SAG 25.82 / UTEX 2576).